A 185-amino-acid polypeptide reads, in one-letter code: Ribonuclease M5 (185 aa).

The region spanning 3-84 (KEVIVVEGRD…KHARISQSEG (82 aa)) is the Toprim domain. Mg(2+)-binding residues include Glu-9, Asp-55, and Asp-57.

It belongs to the ribonuclease M5 family. Requires Mg(2+) as cofactor.

It localises to the cytoplasm. The enzyme catalyses Endonucleolytic cleavage of RNA, removing 21 and 42 nucleotides, respectively, from the 5'- and 3'-termini of a 5S-rRNA precursor.. In terms of biological role, required for correct processing of both the 5' and 3' ends of 5S rRNA precursor. Cleaves both sides of a double-stranded region yielding mature 5S rRNA in one step. The protein is Ribonuclease M5 of Clostridium acetobutylicum (strain ATCC 824 / DSM 792 / JCM 1419 / IAM 19013 / LMG 5710 / NBRC 13948 / NRRL B-527 / VKM B-1787 / 2291 / W).